The primary structure comprises 68 residues: MRQDIHPKYSEITVTCSCGNSFSTRSTAGKDFHIEVCSACHPFYTGKQKLLDTAGRVDKFRQRYNLKS.

Positions 16, 18, 37, and 40 each coordinate Zn(2+).

This sequence belongs to the bacterial ribosomal protein bL31 family. Type A subfamily. As to quaternary structure, part of the 50S ribosomal subunit. It depends on Zn(2+) as a cofactor.

Binds the 23S rRNA. The polypeptide is Large ribosomal subunit protein bL31 (Nitrosococcus oceani (strain ATCC 19707 / BCRC 17464 / JCM 30415 / NCIMB 11848 / C-107)).